We begin with the raw amino-acid sequence, 259 residues long: Global transcriptional regulator CodY (259 aa).

The interval 1–155 (MDLLTRTRKI…GATVVGMEIL (155 aa)) is GAF domain. The segment at residues 203–222 (ASKIADRVGITRSVIVNALR) is a DNA-binding region (H-T-H motif). S215 is modified (phosphoserine).

The protein belongs to the CodY family.

It is found in the cytoplasm. Functionally, DNA-binding global transcriptional regulator which is involved in the adaptive response to starvation and acts by directly or indirectly controlling the expression of numerous genes in response to nutrient availability. During rapid exponential growth, CodY is highly active and represses genes whose products allow adaptation to nutrient depletion. The sequence is that of Global transcriptional regulator CodY from Shouchella clausii (strain KSM-K16) (Alkalihalobacillus clausii).